The following is a 27-amino-acid chain: Dermaseptin-like peptide (27 aa).

Has antimicrobial activity against the Gram-positive bacterium M.luteus and the yeast C.albicans. Has hemolytic activity on human and duck erythrocytes. The protein is Dermaseptin-like peptide of Schistosoma mansoni (Blood fluke).